Reading from the N-terminus, the 509-residue chain is Histidine--tRNA ligase, cytoplasmic (509 aa).

Ala2 carries the N-acetylalanine modification. The WHEP-TRS domain maps to 3–59 (DRAALEDLVRVQGERVRGLKQQKASAEQIEEEVAKLLKLKAQLGPDEGKPKFVLKTP). Ser66 carries the phosphoserine modification. Residues 130–132 (DLT), Arg157, Gln173, Asp177, Arg326, and 330–331 (YY) each bind L-histidine. A Phosphoserine modification is found at Ser356.

Belongs to the class-II aminoacyl-tRNA synthetase family. In terms of assembly, homodimer.

Its subcellular location is the cytoplasm. The catalysed reaction is tRNA(His) + L-histidine + ATP = L-histidyl-tRNA(His) + AMP + diphosphate + H(+). Functionally, catalyzes the ATP-dependent ligation of histidine to the 3'-end of its cognate tRNA, via the formation of an aminoacyl-adenylate intermediate (His-AMP). Plays a role in axon guidance. In Bos taurus (Bovine), this protein is Histidine--tRNA ligase, cytoplasmic (HARS1).